The following is a 302-amino-acid chain: NAD kinase 2 (302 aa).

Asp79 serves as the catalytic Proton acceptor. NAD(+)-binding positions include 79 to 80 (DG), 153 to 154 (NE), Asp183, 194 to 199 (TAYSLS), Ala218, and Asn252.

This sequence belongs to the NAD kinase family. It depends on a divalent metal cation as a cofactor.

The protein resides in the cytoplasm. It catalyses the reaction NAD(+) + ATP = ADP + NADP(+) + H(+). In terms of biological role, involved in the regulation of the intracellular balance of NAD and NADP, and is a key enzyme in the biosynthesis of NADP. Catalyzes specifically the phosphorylation on 2'-hydroxyl of the adenosine moiety of NAD to yield NADP. This Prochlorococcus marinus subsp. pastoris (strain CCMP1986 / NIES-2087 / MED4) protein is NAD kinase 2.